A 330-amino-acid polypeptide reads, in one-letter code: Phosphate acyltransferase (330 aa).

Belongs to the PlsX family. As to quaternary structure, homodimer. Probably interacts with PlsY.

The protein resides in the cytoplasm. It catalyses the reaction a fatty acyl-[ACP] + phosphate = an acyl phosphate + holo-[ACP]. The protein operates within lipid metabolism; phospholipid metabolism. Its function is as follows. Catalyzes the reversible formation of acyl-phosphate (acyl-PO(4)) from acyl-[acyl-carrier-protein] (acyl-ACP). This enzyme utilizes acyl-ACP as fatty acyl donor, but not acyl-CoA. This Bacillus cereus (strain G9842) protein is Phosphate acyltransferase.